Consider the following 352-residue polypeptide: Peptide chain release factor 1 (352 aa).

Glutamine 229 carries the post-translational modification N5-methylglutamine.

Belongs to the prokaryotic/mitochondrial release factor family. In terms of processing, methylated by PrmC. Methylation increases the termination efficiency of RF1.

It localises to the cytoplasm. Its function is as follows. Peptide chain release factor 1 directs the termination of translation in response to the peptide chain termination codons UAG and UAA. The chain is Peptide chain release factor 1 from Acidiphilium cryptum (strain JF-5).